The primary structure comprises 590 residues: Aspartate--tRNA(Asp/Asn) ligase (590 aa).

Glutamate 175 serves as a coordination point for L-aspartate. The interval 199 to 202 is aspartate; sequence QQYK. The L-aspartate site is built by arginine 221 and histidine 450. An ATP-binding site is contributed by 221–223; sequence RDE. Position 484 (glutamate 484) interacts with ATP. Arginine 491 is a binding site for L-aspartate. ATP is bound at residue 536–539; it reads GVDR.

The protein belongs to the class-II aminoacyl-tRNA synthetase family. Type 1 subfamily. As to quaternary structure, homodimer.

Its subcellular location is the cytoplasm. The catalysed reaction is tRNA(Asx) + L-aspartate + ATP = L-aspartyl-tRNA(Asx) + AMP + diphosphate. Functionally, aspartyl-tRNA synthetase with relaxed tRNA specificity since it is able to aspartylate not only its cognate tRNA(Asp) but also tRNA(Asn). Reaction proceeds in two steps: L-aspartate is first activated by ATP to form Asp-AMP and then transferred to the acceptor end of tRNA(Asp/Asn). The polypeptide is Aspartate--tRNA(Asp/Asn) ligase (Nitrobacter hamburgensis (strain DSM 10229 / NCIMB 13809 / X14)).